The sequence spans 152 residues: Large ribosomal subunit protein uL22 (152 aa).

Over residues 124 to 143 (APTKAASKKAAPAKQTTPAA) the composition is skewed to low complexity. The tract at residues 124–152 (APTKAASKKAAPAKQTTPAATESKTEGAE) is disordered.

The protein belongs to the universal ribosomal protein uL22 family. Part of the 50S ribosomal subunit.

Its function is as follows. This protein binds specifically to 23S rRNA; its binding is stimulated by other ribosomal proteins, e.g. L4, L17, and L20. It is important during the early stages of 50S assembly. It makes multiple contacts with different domains of the 23S rRNA in the assembled 50S subunit and ribosome. The globular domain of the protein is located near the polypeptide exit tunnel on the outside of the subunit, while an extended beta-hairpin is found that lines the wall of the exit tunnel in the center of the 70S ribosome. This Salinispora arenicola (strain CNS-205) protein is Large ribosomal subunit protein uL22.